A 160-amino-acid chain; its full sequence is Regulatory protein RecX (160 aa).

The protein belongs to the RecX family.

The protein resides in the cytoplasm. Modulates RecA activity. In Xanthomonas oryzae pv. oryzae (strain MAFF 311018), this protein is Regulatory protein RecX.